A 343-amino-acid chain; its full sequence is tRNA N6-adenosine threonylcarbamoyltransferase (343 aa).

Residues H112 and H116 each contribute to the Fe cation site. Residues 135–139 (LVSGG), D168, G181, and N273 contribute to the substrate site. A Fe cation-binding site is contributed by D301.

This sequence belongs to the KAE1 / TsaD family. The cofactor is Fe(2+).

Its subcellular location is the cytoplasm. It carries out the reaction L-threonylcarbamoyladenylate + adenosine(37) in tRNA = N(6)-L-threonylcarbamoyladenosine(37) in tRNA + AMP + H(+). In terms of biological role, required for the formation of a threonylcarbamoyl group on adenosine at position 37 (t(6)A37) in tRNAs that read codons beginning with adenine. Is involved in the transfer of the threonylcarbamoyl moiety of threonylcarbamoyl-AMP (TC-AMP) to the N6 group of A37, together with TsaE and TsaB. TsaD likely plays a direct catalytic role in this reaction. The sequence is that of tRNA N6-adenosine threonylcarbamoyltransferase from Azoarcus sp. (strain BH72).